A 242-amino-acid polypeptide reads, in one-letter code: 7-cyano-7-deazaguanine synthase (242 aa).

12-22 (FSGGQDSTTCL) contributes to the ATP binding site. 4 residues coordinate Zn(2+): cysteine 200, cysteine 215, cysteine 218, and cysteine 221.

This sequence belongs to the QueC family. It depends on Zn(2+) as a cofactor.

The catalysed reaction is 7-carboxy-7-deazaguanine + NH4(+) + ATP = 7-cyano-7-deazaguanine + ADP + phosphate + H2O + H(+). It participates in purine metabolism; 7-cyano-7-deazaguanine biosynthesis. Functionally, catalyzes the ATP-dependent conversion of 7-carboxy-7-deazaguanine (CDG) to 7-cyano-7-deazaguanine (preQ(0)). This Nitratidesulfovibrio vulgaris (strain ATCC 29579 / DSM 644 / CCUG 34227 / NCIMB 8303 / VKM B-1760 / Hildenborough) (Desulfovibrio vulgaris) protein is 7-cyano-7-deazaguanine synthase.